A 705-amino-acid polypeptide reads, in one-letter code: MSQQYSRRGGGKAKRTQVDAEKKFKLDTLTELFPDWTNEDLIDLVHEFEDLETIIDKITTGAVTKWDEVKKPSKKDRQQKEPAGDVEHIHAGSAAAAFGASAQAQGAPASLQRSHHSAGHQNNAKPYQRQSKYSNSPRQGKQQHQRKEKVAKENLKPAGQPAKSTASSTSWAAMLSKKEDSKLQAPEQQLEEQPQAQSQAQQTEEPVAKESQTEKKVGPQPVAAPLHEEQDSKPKKMTWAAIASKPPKHAENASKKPQEILQNVQDLKKEINKIATEDTAVEHSETTVTHSEVGVNAQAEHESFPIEDGARSVGADDTYYAENVDATNEDAAATVNGNAPAASEEAAAQEDASNANANVPVSLPAEANHQASQQVSFGSEEKQQTPQQPSQQGGMHAGQHVVSQVPQSAQHSSQAAAQTSQQVASQAPQQQTPQQAYYQDTYTQQLPQQQAQAAQAQQYYMNQYQFPGYSYPGMFDSQSAYPVYNHQQFAVPQQGQPTAQSSQNSQQAQSQSQQQQQQQQQQQQQQQQQQQQQQQQQQQYGIPPGYVQAGELAAQSPASTHTQPQQQPQYGGYGMPYYFYQQSFPYAQPQYGMAGQYPYQVPKAAYNYYQPQQMSQAGNQATHQSQSSQNDDSSSASAANPQQGQQGGANSQQQSQAAAAQAQAAAQAQFQQYYQFQQQAAANQQGMPYGYSGYDYTSQTSRGFY.

Disordered regions lie at residues 1 to 20 (MSQQ…QVDA), 62 to 264 (AVTK…LQNV), 277 to 438 (EDTA…QAYY), 491 to 512 (VPQQ…QSQS), and 614 to 656 (MSQA…QQSQ). Residues 21–63 (EKKFKLDTLTELFPDWTNEDLIDLVHEFEDLETIIDKITTGAV) enclose the CUE domain. The segment covering 65–90 (KWDEVKKPSKKDRQQKEPAGDVEHIH) has biased composition (basic and acidic residues). Over residues 91 to 112 (AGSAAAAFGASAQAQGAPASLQ) the composition is skewed to low complexity. The segment covering 119–140 (GHQNNAKPYQRQSKYSNSPRQG) has biased composition (polar residues). Low complexity-rich tracts occupy residues 162 to 173 (AKSTASSTSWAA) and 184 to 205 (QAPE…QTEE). Basic and acidic residues-rich tracts occupy residues 206-217 (PVAKESQTEKKV), 248-258 (KHAENASKKPQ), and 299-310 (AEHESFPIEDGA). Composition is skewed to low complexity over residues 331–358 (AAAT…ANAN), 399–438 (QHVV…QAYY), and 500–512 (QSSQ…QSQS). A compositionally biased stretch (polar residues) spans 614 to 623 (MSQAGNQATH). The span at 624 to 656 (QSQSSQNDDSSSASAANPQQGQQGGANSQQQSQ) shows a compositional bias: low complexity.

It belongs to the DEF1 family. As to quaternary structure, homodimer; may form higher order oligomers. Interacts with the large RNA polymerase II subunit RPO21; the interaction is direct and serves to bridge RPO21 to the Elongin complex in a manner dependent on transcription stress. Interacts with RAD26. Post-translationally, ubiquitinated. In terms of processing, proteolytically cleaved by the proteasome in response to transcription stress; the resulting N-terminal form constitutes the activated nuclear form and the C-terminal portion is degraded.

It is found in the cytoplasm. The protein resides in the nucleus. It localises to the chromosome. Its subcellular location is the telomere. Its function is as follows. Recruits the ubiquitination machinery to RNA polymerase II for polyubiquitination, removal and degradation, when the transcription-coupled repair (TCR) factor RAD26 fails to efficiently displace stalled RNA polymerase II. Also involved in telomere length regulation. Binds DNA. In Eremothecium gossypii (strain ATCC 10895 / CBS 109.51 / FGSC 9923 / NRRL Y-1056) (Yeast), this protein is RNA polymerase II degradation factor 1 (DEF1).